A 122-amino-acid polypeptide reads, in one-letter code: Large ribosomal subunit protein uL14c (122 aa).

This sequence belongs to the universal ribosomal protein uL14 family. In terms of assembly, part of the 50S ribosomal subunit.

It is found in the plastid. Its function is as follows. Binds to 23S rRNA. The polypeptide is Large ribosomal subunit protein uL14c (Euglena longa (Euglenophycean alga)).